The sequence spans 478 residues: Cytochrome P450 family 716 subfamily AD polypeptide 4 (478 aa).

Residues M1–F21 form a helical membrane-spanning segment. A heme-binding site is contributed by C425.

It belongs to the cytochrome P450 family. Requires heme as cofactor. In terms of tissue distribution, mainly expressed in petioles and, to a lower extent, in roots.

The protein resides in the membrane. The enzyme catalyses (1S,3bR,4R,5aR,9aR,9bR,11aS)-1-[(4R)-5-[(2S)-3,3-dimethyloxiran-2-yl]-1,4-dihydroxybutan-2-yl]-3b,6,6,9a,11a-pentamethyl-7-oxo-1H,2H,3bH,4H,5H,5aH,6H,7H,9aH,9bH,10H,11H,11aH-cyclopenta[a]phenanthren-4-yl acetate + reduced [NADPH--hemoprotein reductase] + O2 = (1S,3bR,4R,5aR,9aR,9bR,11aS)-1-(1-hydroxy-4-oxobutan-2-yl)-3b,6,6,9a,11a-pentamethyl-7-oxo-1H,2H,3bH,4H,5H,5aH,6H,7H,9aH,9bH,10H,11H,11aH-cyclopenta[a]phenanthren-4-yl acetate + 2-methylpropanoate + oxidized [NADPH--hemoprotein reductase] + H2O + 2 H(+). It participates in secondary metabolite biosynthesis; terpenoid biosynthesis. Its function is as follows. Monooxygenase involved in the biosynthesis of limonoids triterpene natural products such as azadirachtin, an antifeedant widely used as bioinsecticide, and possessing many medicinal applications including anti-tumoral, anti-malarial, anti-rheumatic, antibacterial, anti-inflammatory, anti-pyretic and diuretic effects. Catalyzes the formation of (1S,3bR,4R,5aR,9aR,9bR,11aS)-1-(1-hydroxy-4-oxobutan-2-yl)-3b,6,6,9a,11a-pentamethyl-7-oxo-1H,2H,3bH,4H,5H,5aH,6H,7H,9aH,9bH,10H,11H,11aH-cyclopenta[a]phenanthren-4-yl acetate. This chain is Cytochrome P450 family 716 subfamily AD polypeptide 4, found in Melia azedarach (Chinaberry tree).